A 243-amino-acid polypeptide reads, in one-letter code: Probable septum site-determining protein MinC (243 aa).

It belongs to the MinC family. In terms of assembly, interacts with MinD and FtsZ.

Functionally, cell division inhibitor that blocks the formation of polar Z ring septums. Rapidly oscillates between the poles of the cell to destabilize FtsZ filaments that have formed before they mature into polar Z rings. Prevents FtsZ polymerization. This Agathobacter rectalis (strain ATCC 33656 / DSM 3377 / JCM 17463 / KCTC 5835 / VPI 0990) (Eubacterium rectale) protein is Probable septum site-determining protein MinC.